We begin with the raw amino-acid sequence, 275 residues long: MTPHPIQDAVLRVDRLSVVYPGGVTALRDTSIAFRRGEFTVLLGLSGAGKSTLLRSLNRLVTPTGGSVTSELGELGSGSALRQHRRRTAMIFQHHQLIERQSALANVLTGRLAFHNTLRSLFPLPRADQEIALSCLARVGLADKALSRVDKLSGGQQQRVGIARALAQQPAIILADEPVASLDPATSVRVLGLLRDICKEDGITAIVSLHQLEYARRFADRVVGLADSQIVFDAAPSELTDAQLERIYAGRSTTQPANAPAEPPVMLEPSLEMSR.

The region spanning 11 to 252 (LRVDRLSVVY…QLERIYAGRS (242 aa)) is the ABC transporter domain. 44 to 51 (GLSGAGKS) provides a ligand contact to ATP. The disordered stretch occupies residues 251–275 (RSTTQPANAPAEPPVMLEPSLEMSR).

The protein belongs to the ABC transporter superfamily. Phosphonates importer (TC 3.A.1.9.1) family. The complex is composed of two ATP-binding proteins (PtxA), two transmembrane proteins (PtxC) and a solute-binding protein (PtxB).

It localises to the cell inner membrane. The enzyme catalyses phosphite(out) + ATP + H2O = phosphite(in) + ADP + phosphate + H(+). Its function is as follows. Part of the ABC transporter complex PtxABC involved in phosphite import. Responsible for energy coupling to the transport system. This chain is Phosphite import ATP-binding protein PxtA (ptxA), found in Stutzerimonas stutzeri (Pseudomonas stutzeri).